The following is a 291-amino-acid chain: Small ribosomal subunit biogenesis GTPase RsgA 1 (291 aa).

The CP-type G domain occupies 63–221; the sequence is ENALVRPPVA…VADTPGFSSI (159 aa). Residues 112 to 115 and 164 to 172 contribute to the GTP site; these read SKMD and GQSGVGKST. Residues cysteine 245, cysteine 250, histidine 252, and cysteine 258 each coordinate Zn(2+).

Belongs to the TRAFAC class YlqF/YawG GTPase family. RsgA subfamily. In terms of assembly, monomer. Associates with 30S ribosomal subunit, binds 16S rRNA. Requires Zn(2+) as cofactor.

It localises to the cytoplasm. One of several proteins that assist in the late maturation steps of the functional core of the 30S ribosomal subunit. Helps release RbfA from mature subunits. May play a role in the assembly of ribosomal proteins into the subunit. Circularly permuted GTPase that catalyzes slow GTP hydrolysis, GTPase activity is stimulated by the 30S ribosomal subunit. The protein is Small ribosomal subunit biogenesis GTPase RsgA 1 of Listeria monocytogenes serotype 4b (strain F2365).